Reading from the N-terminus, the 689-residue chain is Methionine--tRNA ligase (689 aa).

Positions 16-26 match the 'HIGH' region motif; the sequence is PYANAGLHLGH. The Zn(2+) site is built by Cys-147, Cys-150, Cys-160, and Cys-163. A 'KMSKS' region motif is present at residues 342 to 346; the sequence is KMSKS. Residue Lys-345 participates in ATP binding. A tRNA-binding domain is found at 585–689; that stretch reads DFAKVDLRVG…AGVKPGMRVG (105 aa).

Belongs to the class-I aminoacyl-tRNA synthetase family. MetG type 1 subfamily. Homodimer. Zn(2+) serves as cofactor.

The protein resides in the cytoplasm. The catalysed reaction is tRNA(Met) + L-methionine + ATP = L-methionyl-tRNA(Met) + AMP + diphosphate. In terms of biological role, is required not only for elongation of protein synthesis but also for the initiation of all mRNA translation through initiator tRNA(fMet) aminoacylation. In Chromobacterium violaceum (strain ATCC 12472 / DSM 30191 / JCM 1249 / CCUG 213 / NBRC 12614 / NCIMB 9131 / NCTC 9757 / MK), this protein is Methionine--tRNA ligase.